The following is a 701-amino-acid chain: Polyribonucleotide nucleotidyltransferase (701 aa).

Aspartate 487 and aspartate 493 together coordinate Mg(2+). Positions 553–612 constitute a KH domain; sequence PRLYTLRINPDKIRDVIGKGGSVIRALTEETGTSIDIAEDGLITIASVSAEGAEEAKRRI. The 71-residue stretch at 622 to 692 folds into the S1 motif domain; the sequence is GKIYEGTVVK…ERGRIRLSIK (71 aa).

This sequence belongs to the polyribonucleotide nucleotidyltransferase family. It depends on Mg(2+) as a cofactor.

It is found in the cytoplasm. The enzyme catalyses RNA(n+1) + phosphate = RNA(n) + a ribonucleoside 5'-diphosphate. In terms of biological role, involved in mRNA degradation. Catalyzes the phosphorolysis of single-stranded polyribonucleotides processively in the 3'- to 5'-direction. The sequence is that of Polyribonucleotide nucleotidyltransferase from Laribacter hongkongensis (strain HLHK9).